Reading from the N-terminus, the 296-residue chain is 4-hydroxybenzoate octaprenyltransferase (296 aa).

Transmembrane regions (helical) follow at residues 29–49 (AGWLLLLWPTLSALWVAAGGF), 52–72 (WHLLSVFTLGTILMRSAGCCI), 103–123 (LVLGAVLALLAFALVLTTNAI), 151–171 (VLGVAFGMGIPMAFAAVLGEV), 176–196 (WLLMLGNLFWVLAYDTEYAMV), 220–240 (VILLCYLAFIVIWDVALMPYV), 243–263 (ALFTIAFALAFGQVAWHYTLI), and 275–295 (FRLNHWLGFTLFVGIAGSYAL).

Belongs to the UbiA prenyltransferase family. The cofactor is Mg(2+).

It is found in the cell inner membrane. It catalyses the reaction all-trans-octaprenyl diphosphate + 4-hydroxybenzoate = 4-hydroxy-3-(all-trans-octaprenyl)benzoate + diphosphate. The protein operates within cofactor biosynthesis; ubiquinone biosynthesis. Functionally, catalyzes the prenylation of para-hydroxybenzoate (PHB) with an all-trans polyprenyl group. Mediates the second step in the final reaction sequence of ubiquinone-8 (UQ-8) biosynthesis, which is the condensation of the polyisoprenoid side chain with PHB, generating the first membrane-bound Q intermediate 3-octaprenyl-4-hydroxybenzoate. The chain is 4-hydroxybenzoate octaprenyltransferase from Albidiferax ferrireducens (strain ATCC BAA-621 / DSM 15236 / T118) (Rhodoferax ferrireducens).